The chain runs to 178 residues: Large ribosomal subunit protein uL6 (178 aa).

It belongs to the universal ribosomal protein uL6 family. As to quaternary structure, part of the 50S ribosomal subunit.

This protein binds to the 23S rRNA, and is important in its secondary structure. It is located near the subunit interface in the base of the L7/L12 stalk, and near the tRNA binding site of the peptidyltransferase center. The polypeptide is Large ribosomal subunit protein uL6 (Bacillus licheniformis (strain ATCC 14580 / DSM 13 / JCM 2505 / CCUG 7422 / NBRC 12200 / NCIMB 9375 / NCTC 10341 / NRRL NRS-1264 / Gibson 46)).